A 551-amino-acid polypeptide reads, in one-letter code: Probable NADH-ubiquinone oxidoreductase C947.15c, mitochondrial (551 aa).

The N-terminal 35 residues, Met1–Lys35, are a transit peptide targeting the mitochondrion. Asn92–Arg122 contacts FAD. Leu255 to Asp291 contributes to the NAD(+) binding site.

The protein belongs to the NADH dehydrogenase family.

The protein resides in the mitochondrion. The catalysed reaction is a quinone + NADH + H(+) = a quinol + NAD(+). It catalyses the reaction a ubiquinone + NADH + H(+) = a ubiquinol + NAD(+). Catalyzes the oxidation of NADH. This is Probable NADH-ubiquinone oxidoreductase C947.15c, mitochondrial from Schizosaccharomyces pombe (strain 972 / ATCC 24843) (Fission yeast).